The chain runs to 518 residues: Nitrogenase iron-iron protein alpha chain (518 aa).

The [8Fe-7S] cluster site is built by C49 and C75. Positions 257 and 423 each coordinate [8Fe-9S-C-homocitryl] cluster.

In terms of assembly, hexamer of two alpha, two beta, and two delta chains. The cofactor is [8Fe-7S] cluster. It depends on [8Fe-9S-C-homocitryl] cluster as a cofactor.

It catalyses the reaction N2 + 8 reduced [2Fe-2S]-[ferredoxin] + 16 ATP + 16 H2O = H2 + 8 oxidized [2Fe-2S]-[ferredoxin] + 2 NH4(+) + 16 ADP + 16 phosphate + 6 H(+). This iron-iron protein is part of the nitrogenase complex that catalyzes the key enzymatic reactions in nitrogen fixation. Other nitrogenase complexes utilize a molybdenum-iron protein or a vanadium-iron protein. This chain is Nitrogenase iron-iron protein alpha chain (anfD), found in Ruminiclostridium hungatei (Clostridium hungatei).